The sequence spans 471 residues: UDP-N-acetylmuramate--L-alanine ligase (471 aa).

114–120 serves as a coordination point for ATP; that stretch reads GTHGKTT.

It belongs to the MurCDEF family.

Its subcellular location is the cytoplasm. The enzyme catalyses UDP-N-acetyl-alpha-D-muramate + L-alanine + ATP = UDP-N-acetyl-alpha-D-muramoyl-L-alanine + ADP + phosphate + H(+). Its pathway is cell wall biogenesis; peptidoglycan biosynthesis. Its function is as follows. Cell wall formation. The chain is UDP-N-acetylmuramate--L-alanine ligase from Agrobacterium fabrum (strain C58 / ATCC 33970) (Agrobacterium tumefaciens (strain C58)).